Consider the following 802-residue polypeptide: G-type lectin S-receptor-like serine/threonine-protein kinase At1g61550 (802 aa).

An N-terminal signal peptide occupies residues 1–19; sequence MTRFACFLFSTLLLSFSYA. The Bulb-type lectin domain maps to 20–139; it reads AITPTSPLSI…VSGITLWQSF (120 aa). The Extracellular segment spans residues 20–421; it reads AITPTSPLSI…EMGGNQRKKT (402 aa). N-linked (GlcNAc...) asparagine glycans are attached at residues Asn48, Asn89, Asn112, Asn231, and Asn262. One can recognise an EGF-like domain in the interval 273-309; it reads PANTCDFYGVCGPFGLCVMSIPPKCKCFKGFVPQFSE. Intrachain disulfides connect Cys277/Cys289 and Cys283/Cys297. N-linked (GlcNAc...) asparagine glycans are attached at residues Asn315, Asn331, and Asn370. In terms of domain architecture, PAN spans 328–410; the sequence is CQGNSTGRHV…GELLSIRLAS (83 aa). Disulfide bonds link Cys363–Cys384 and Cys367–Cys373. A helical membrane pass occupies residues 422–442; that stretch reads IIASIVSISLFVTLASAAFGF. Residues 443-802 lie on the Cytoplasmic side of the membrane; it reads WRYRLKHNAI…EVTQSVVLGR (360 aa). One can recognise a Protein kinase domain in the interval 489–774; the sequence is FSLVNKLGQG…DLPLPKEPTF (286 aa). Residues 495–503 and Lys517 contribute to the ATP site; that span reads LGQGGFGPV. Phosphoserine is present on residues Ser523 and Ser538. The interval 578 to 595 is caM-binding; the sequence is RKRVEIDWPKRFSIIQGI. Asp614 (proton acceptor) is an active-site residue. Phosphoserine occurs at positions 618 and 631. Thr648 is subject to Phosphothreonine. Ser691 is modified (phosphoserine).

Belongs to the protein kinase superfamily. Ser/Thr protein kinase family.

The protein resides in the cell membrane. The enzyme catalyses L-seryl-[protein] + ATP = O-phospho-L-seryl-[protein] + ADP + H(+). It catalyses the reaction L-threonyl-[protein] + ATP = O-phospho-L-threonyl-[protein] + ADP + H(+). This is G-type lectin S-receptor-like serine/threonine-protein kinase At1g61550 from Arabidopsis thaliana (Mouse-ear cress).